The primary structure comprises 523 residues: MKKFKRRLSLTLRGSQTIDESLSELAEQMTIEESSSKDNEPIVKNGRPPTSHSVHSFLHQYTGSFKKPPLRRPHSVIGGSLGSFMAMPRNGSRLDIVHENLKMGSDGESDQASGTSSDEVQSPTGVCLRNRIHRRISMEDLNKRLSLPADIRIPDGYLEKLQISSPPFDQPMSRRSRRASLSEIGFGKMETYIKLEKLGEGTYATVYKGRSKLTENLVALKEIRLEHEEGAPCTAIREVSLLKDLKHANIVTLHDIVHTDKSLTLVFEYLDKDLKQYMDDCGNIMSMHNVKLFLYQILRGLAYCHRRKVLHRDLKPQNLLINERGELKLADFGLARAKSVPTKTYSNEVVTLWYRPPDVLLGSSEYSTQIDMWGVGCIFFEMASGRPLFPGSTVEDELHLIFRLLGTPSQETWPGVSSNDEFKNYNFPKYKPQPLINHAPRLDSEGIELITKFLQYESKKRVPAEEAMKHVYFRSLGPRIHALPESVSIFSLKEIQLQKDPGFRNSSYPETGHGKNRRQSMLF.

The residue at position 9 (Ser9) is a Phosphoserine. The disordered stretch occupies residues 30-55; sequence TIEESSSKDNEPIVKNGRPPTSHSVH. 3 positions are modified to phosphoserine: Ser80, Ser92, and Ser105. The segment at 103–123 is disordered; sequence MGSDGESDQASGTSSDEVQSP. Over residues 110-123 the composition is skewed to polar residues; that stretch reads DQASGTSSDEVQSP. 4 positions are modified to phosphoserine: Ser137, Ser146, Ser165, and Ser180. The region spanning 192 to 473 is the Protein kinase domain; the sequence is YIKLEKLGEG…AEEAMKHVYF (282 aa). ATP contacts are provided by residues 198–206 and Lys221; that span reads LGEGTYATV. The Proton acceptor role is filled by Asp313. A disordered region spans residues 501-523; that stretch reads PGFRNSSYPETGHGKNRRQSMLF. A compositionally biased stretch (basic residues) spans 514 to 523; that stretch reads GKNRRQSMLF.

This sequence belongs to the protein kinase superfamily. CMGC Ser/Thr protein kinase family. CDC2/CDKX subfamily. Found in a complex containing CABLES1, CDK16 and TDRD7. Interacts with TDRD7.

The enzyme catalyses L-seryl-[protein] + ATP = O-phospho-L-seryl-[protein] + ADP + H(+). It carries out the reaction L-threonyl-[protein] + ATP = O-phospho-L-threonyl-[protein] + ADP + H(+). Its function is as follows. May play a role in terminally differentiated neurons. Has a Ser/Thr-phosphorylating activity for histone H1. This Mus musculus (Mouse) protein is Cyclin-dependent kinase 17 (Cdk17).